The primary structure comprises 237 residues: Octanoyltransferase (237 aa).

The BPL/LPL catalytic domain maps to 27–210; it reads SGGDDILLLL…EFYHIFQPAG (184 aa). Substrate is bound by residues 72-79, 139-141, and 152-154; these read RGGNVTCH, SLG, and GMA. Cys-170 functions as the Acyl-thioester intermediate in the catalytic mechanism.

It belongs to the LipB family.

Its subcellular location is the cytoplasm. It catalyses the reaction octanoyl-[ACP] + L-lysyl-[protein] = N(6)-octanoyl-L-lysyl-[protein] + holo-[ACP] + H(+). Its pathway is protein modification; protein lipoylation via endogenous pathway; protein N(6)-(lipoyl)lysine from octanoyl-[acyl-carrier-protein]: step 1/2. Catalyzes the transfer of endogenously produced octanoic acid from octanoyl-acyl-carrier-protein onto the lipoyl domains of lipoate-dependent enzymes. Lipoyl-ACP can also act as a substrate although octanoyl-ACP is likely to be the physiological substrate. This chain is Octanoyltransferase, found in Desulfovibrio desulfuricans (strain ATCC 27774 / DSM 6949 / MB).